An 880-amino-acid polypeptide reads, in one-letter code: Leucine--tRNA ligase (880 aa).

The 'HIGH' region signature appears at 46-56 (PYPSGALHMGH). The 'KMSKS' region motif lies at 638-642 (KMSKS). Lysine 641 lines the ATP pocket.

It belongs to the class-I aminoacyl-tRNA synthetase family.

It localises to the cytoplasm. It carries out the reaction tRNA(Leu) + L-leucine + ATP = L-leucyl-tRNA(Leu) + AMP + diphosphate. The protein is Leucine--tRNA ligase of Xanthomonas axonopodis pv. citri (strain 306).